A 108-amino-acid polypeptide reads, in one-letter code: ATP-dependent Clp protease adapter protein ClpS (108 aa).

This sequence belongs to the ClpS family. In terms of assembly, binds to the N-terminal domain of the chaperone ClpA.

Involved in the modulation of the specificity of the ClpAP-mediated ATP-dependent protein degradation. This chain is ATP-dependent Clp protease adapter protein ClpS, found in Ralstonia pickettii (strain 12J).